The chain runs to 92 residues: Acylphosphatase (92 aa).

An intrachain disulfide couples Cys-5 to Cys-49. Residues 5 to 92 enclose the Acylphosphatase-like domain; it reads CIIAWVYGRV…SGELTDFRIR (88 aa). Residues Arg-20 and Asn-38 contribute to the active site.

It belongs to the acylphosphatase family.

The catalysed reaction is an acyl phosphate + H2O = a carboxylate + phosphate + H(+). This is Acylphosphatase from Escherichia coli O157:H7.